The chain runs to 42 residues: uncharacterized protein (42 aa).

This is an uncharacterized protein from Pasteurella multocida (strain Pm70).